The following is a 189-amino-acid chain: Pyridoxal 5'-phosphate synthase subunit PdxT (189 aa).

Residue 48–50 (GES) coordinates L-glutamine. Cys80 acts as the Nucleophile in catalysis. Residues Arg107 and 136-137 (IR) contribute to the L-glutamine site. Active-site charge relay system residues include His172 and Glu174.

Belongs to the glutaminase PdxT/SNO family. In terms of assembly, in the presence of PdxS, forms a dodecamer of heterodimers. Only shows activity in the heterodimer.

The catalysed reaction is aldehydo-D-ribose 5-phosphate + D-glyceraldehyde 3-phosphate + L-glutamine = pyridoxal 5'-phosphate + L-glutamate + phosphate + 3 H2O + H(+). The enzyme catalyses L-glutamine + H2O = L-glutamate + NH4(+). Its pathway is cofactor biosynthesis; pyridoxal 5'-phosphate biosynthesis. Catalyzes the hydrolysis of glutamine to glutamate and ammonia as part of the biosynthesis of pyridoxal 5'-phosphate. The resulting ammonia molecule is channeled to the active site of PdxS. This Ruminiclostridium cellulolyticum (strain ATCC 35319 / DSM 5812 / JCM 6584 / H10) (Clostridium cellulolyticum) protein is Pyridoxal 5'-phosphate synthase subunit PdxT.